A 625-amino-acid polypeptide reads, in one-letter code: Exonuclease mut-7 homolog (625 aa).

Serine 17 is modified (phosphoserine). Positions 410–602 (LIIVNKADEF…IYNTLIERVS (193 aa)) constitute a 3'-5' exonuclease domain.

The protein belongs to the mut-7 family. As to quaternary structure, interacts with AGO1; the interaction is not RNA dependent. Mg(2+) serves as cofactor.

Its function is as follows. Possesses 3'-5' exoribonuclease activity. Required for 3'-end trimming of AGO1-bound miRNAs, in particular multiple-isoform miRNAs, which represents a critical step in miRNA maturation. This is Exonuclease mut-7 homolog (Nbr) from Drosophila melanogaster (Fruit fly).